The sequence spans 876 residues: Alanine--tRNA ligase (876 aa).

Zn(2+)-binding residues include His-563, His-567, Cys-665, and His-669.

This sequence belongs to the class-II aminoacyl-tRNA synthetase family. Zn(2+) serves as cofactor.

Its subcellular location is the cytoplasm. The catalysed reaction is tRNA(Ala) + L-alanine + ATP = L-alanyl-tRNA(Ala) + AMP + diphosphate. Catalyzes the attachment of alanine to tRNA(Ala) in a two-step reaction: alanine is first activated by ATP to form Ala-AMP and then transferred to the acceptor end of tRNA(Ala). Also edits incorrectly charged Ser-tRNA(Ala) and Gly-tRNA(Ala) via its editing domain. This is Alanine--tRNA ligase from Shouchella clausii (strain KSM-K16) (Alkalihalobacillus clausii).